Consider the following 565-residue polypeptide: Deformed epidermal autoregulatory factor 1 homolog (565 aa).

Disordered regions lie at residues 34–62 (GGEAEEPVLSRDEDSEEDADSEAERETPR) and 162–190 (GLKGPAAPLTPGPQSPPTPLAPGQEKGGT). Positions 169–181 (PLTPGPQSPPTPL) are enriched in pro residues. T171 carries the post-translational modification Phosphothreonine. At S176 the chain carries Phosphoserine. T179 bears the Phosphothreonine mark. In terms of domain architecture, SAND spans 193–273 (NWDPSVYDSE…QCLIQDGILN (81 aa)). The Nuclear localization signal motif lies at 301-316 (KRRKKENELPTTPVKK). The interaction with LMO4 stretch occupies residues 403–478 (IAPFPEAALP…QLKTLFEQAK (76 aa)). Residue T432 is modified to Phosphothreonine. Phosphoserine is present on S448. Positions 504, 507, 515, 518, 524, 528, 536, and 540 each coordinate Zn(2+). The MYND-type zinc finger occupies 504–540 (CVNCGREAMNECTGCHKVNYCSTFCQRKDWKDHQHIC).

Homodimer. Interacts with LMO4; LMO4 blocks export from nucleus. Interacts with LMO2 and CLIM2. May interact with the corepressors NCOR1 and NCRO2. Identified in a complex with XRCC5 and XRCC6. Interacts (via the SAND domain) with the DNA-PK complex subunit XRCC6; the interaction is direct and may be inhibited by DNA-binding. Post-translationally, may be phosphorylated by DNA-PK complex in a DNA independent manner (in vitro).

The protein resides in the nucleus. Transcription factor that binds to sequence with multiple copies of 5'-TTC[CG]G-3' present in its own promoter and that of the HNRPA2B1 gene. Down-regulates transcription of these genes. Binds to the retinoic acid response element (RARE) 5'-AGGGTTCACCGAAAGTTCA-3'. Activates the proenkephalin gene independently of promoter binding, probably through protein-protein interaction. Regulates epithelial cell proliferation and side-branching in the mammary gland. Required for neural tube closure and skeletal patterning. Controls the expression of peripheral tissue antigens in pancreatic lymph nodes. Transcriptional activator of EIF4G3. May also involved in behavior. The chain is Deformed epidermal autoregulatory factor 1 homolog (DEAF1) from Pan troglodytes (Chimpanzee).